A 49-amino-acid polypeptide reads, in one-letter code: Omega-segestritoxin-Sf1a (49 aa).

4 disulfides stabilise this stretch: C3/C22, C10/C27, C21/C48, and C29/C46.

Expressed by the venom gland.

It localises to the secreted. Functionally, potent and selective blocker of N-type voltage-gated calcium channels (Cav2.2/CACNA1B). Also blocks vertebrate Cav2.1/CACNA1A (P/Q-type) and Cav1.2/CACNA1C (L-type) channels at very high concentration (2 micromolar). In Segestria florentina (Tube-web spider), this protein is Omega-segestritoxin-Sf1a.